Consider the following 519-residue polypeptide: Ribonuclease Y (519 aa).

A helical membrane pass occupies residues 3 to 23 (LMIFAYIAIGAVLGAGTGYLL). A KH domain is found at 209 to 272 (TVTAVTLPSE…QVAKMALERL (64 aa)). The HD domain maps to 335 to 428 (VLQHSLEVSA…VQAADSISGA (94 aa)).

The protein belongs to the RNase Y family.

The protein localises to the cell membrane. Its function is as follows. Endoribonuclease that initiates mRNA decay. The sequence is that of Ribonuclease Y from Nitratidesulfovibrio vulgaris (strain ATCC 29579 / DSM 644 / CCUG 34227 / NCIMB 8303 / VKM B-1760 / Hildenborough) (Desulfovibrio vulgaris).